A 353-amino-acid chain; its full sequence is UDP-3-O-acylglucosamine N-acyltransferase (353 aa).

His242 functions as the Proton acceptor in the catalytic mechanism.

Belongs to the transferase hexapeptide repeat family. LpxD subfamily. In terms of assembly, homotrimer.

The catalysed reaction is a UDP-3-O-[(3R)-3-hydroxyacyl]-alpha-D-glucosamine + a (3R)-hydroxyacyl-[ACP] = a UDP-2-N,3-O-bis[(3R)-3-hydroxyacyl]-alpha-D-glucosamine + holo-[ACP] + H(+). The protein operates within bacterial outer membrane biogenesis; LPS lipid A biosynthesis. Catalyzes the N-acylation of UDP-3-O-acylglucosamine using 3-hydroxyacyl-ACP as the acyl donor. Is involved in the biosynthesis of lipid A, a phosphorylated glycolipid that anchors the lipopolysaccharide to the outer membrane of the cell. In Pseudomonas aeruginosa (strain UCBPP-PA14), this protein is UDP-3-O-acylglucosamine N-acyltransferase.